Consider the following 259-residue polypeptide: UPF0246 protein Avin_11220 (259 aa).

The protein belongs to the UPF0246 family.

This Azotobacter vinelandii (strain DJ / ATCC BAA-1303) protein is UPF0246 protein Avin_11220.